We begin with the raw amino-acid sequence, 470 residues long: Minor capsid protein L2 (470 aa).

The Nuclear localization signal signature appears at 1–12 (MVSHRAARRKRA). Cysteine 21 and cysteine 27 are oxidised to a cystine. Positions 451 to 459 (FFLKKRKRI) match the Nuclear localization signal motif.

This sequence belongs to the papillomaviridae L2 protein family. In terms of assembly, interacts with major capsid protein L1. Interacts with E2; this interaction inhibits E2 transcriptional activity but not the DNA replication function E2. Interacts with host GADD45GIP1. Interacts with host HSPA8; this interaction is required for L2 nuclear translocation. Interacts with host importins KPNB2 and KPNB3. Forms a complex with importin alpha2-beta1 heterodimers via interaction with the importin alpha2 adapter. Interacts with host DYNLT1; this interaction is essential for virus intracellular transport during entry. Interacts (via C-terminus) with host retromer subunits VPS35 and VPS29. Highly phosphorylated.

The protein localises to the virion. The protein resides in the host nucleus. It localises to the host early endosome. It is found in the host Golgi apparatus. Functionally, minor protein of the capsid that localizes along the inner surface of the virion, within the central cavities beneath the L1 pentamers. Plays a role in capsid stabilization through interaction with the major capsid protein L1. Once the virion enters the host cell, L2 escorts the genomic DNA into the nucleus by promoting escape from the endosomal compartments and traffic through the host Golgi network. Mechanistically, the C-terminus of L2 possesses a cell-penetrating peptide that protudes from the host endosome, interacts with host cytoplasmic retromer cargo and thereby mediates the capsid delivery to the host trans-Golgi network. Plays a role through its interaction with host dynein in the intracellular microtubule-dependent transport of viral capsid toward the nucleus. Mediates the viral genome import into the nucleus through binding to host importins. Once within the nucleus, L2 localizes viral genomes to host PML bodies in order to activate early gene expression for establishment of infection. Later on, promotes late gene expression by interacting with the viral E2 protein and by inhibiting its transcriptional activation functions. During virion assembly, encapsidates the genome by direct interaction with the viral DNA. The chain is Minor capsid protein L2 from Human papillomavirus 39.